Reading from the N-terminus, the 307-residue chain is Pantothenate kinase (307 aa).

90-97 (GSVAVGKS) is a binding site for ATP.

The protein belongs to the prokaryotic pantothenate kinase family.

It is found in the cytoplasm. It carries out the reaction (R)-pantothenate + ATP = (R)-4'-phosphopantothenate + ADP + H(+). The protein operates within cofactor biosynthesis; coenzyme A biosynthesis; CoA from (R)-pantothenate: step 1/5. The chain is Pantothenate kinase from Limosilactobacillus fermentum (strain NBRC 3956 / LMG 18251) (Lactobacillus fermentum).